We begin with the raw amino-acid sequence, 328 residues long: Probable voltage-gated potassium channel subunit beta (328 aa).

NADP(+) is bound by residues W21, Q27, and D49. Y54 serves as the catalytic Proton donor/acceptor. NADP(+)-binding residues include S152, Q178, W207, S208, P209, L210, A211, K218, R229, G285, T287, Q291, E294, and N295.

This sequence belongs to the shaker potassium channel beta subunit family. In terms of assembly, forms heteromultimeric complexes with potassium channel alpha subunits. As to expression, expressed in roots, leaves and flowers (at protein level).

Its function is as follows. Probable accessory potassium channel protein which modulates the activity of the pore-forming alpha subunit. The chain is Probable voltage-gated potassium channel subunit beta (KAB1) from Arabidopsis thaliana (Mouse-ear cress).